Reading from the N-terminus, the 627-residue chain is uncharacterized protein (627 aa).

Residues 1–20 (MAKFKKDLTTKNKDTDRLSE) are compositionally biased toward basic and acidic residues. Disordered stretches follow at residues 1–22 (MAKFKKDLTTKNKDTDRLSEEI) and 578–606 (LSLGSEEEQGQEETEASIQNAGDKKLLPV). The span at 582-592 (SEEEQGQEETE) shows a compositional bias: acidic residues.

This is an uncharacterized protein from Rickettsia prowazekii (strain Madrid E).